Here is a 739-residue protein sequence, read N- to C-terminus: Polyribonucleotide nucleotidyltransferase (739 aa).

Mg(2+) is bound by residues aspartate 514 and aspartate 520. Residues 580-639 form the KH domain; it reads PRIITVKIPVDKIGEVIGPKGKMINQIQEDTGADITIEDDGTIYIGAAQGSQAEAARATI. Positions 651–723 constitute an S1 motif domain; the sequence is GERYLGTVVK…SRGKLSLIPV (73 aa).

It belongs to the polyribonucleotide nucleotidyltransferase family. Mg(2+) is required as a cofactor.

The protein localises to the cytoplasm. It catalyses the reaction RNA(n+1) + phosphate = RNA(n) + a ribonucleoside 5'-diphosphate. Involved in mRNA degradation. Catalyzes the phosphorolysis of single-stranded polyribonucleotides processively in the 3'- to 5'-direction. The polypeptide is Polyribonucleotide nucleotidyltransferase (Streptomyces coelicolor (strain ATCC BAA-471 / A3(2) / M145)).